The chain runs to 381 residues: Glycerophosphocholine acyltransferase 1 (381 aa).

At 1-63 the chain is on the cytoplasmic side; that stretch reads MANNEDSNSN…IAKQAEEHER (63 aa). Residues 64 to 84 form a helical membrane-spanning segment; it reads FINKVTHLVGVLGFGGFCFLL. Topologically, residues 85–89 are lumenal; it reads GARPQ. Residues 90–110 form a helical membrane-spanning segment; sequence DIPLVYCFFYVIFVPLRWIYY. The Cytoplasmic portion of the chain corresponds to 111 to 116; that stretch reads RFKKWH. A helical membrane pass occupies residues 117-137; sequence YYLLDFCYYANTIFLVDLLLY. Residues 138–141 lie on the Lumenal side of the membrane; the sequence is PKNE. The helical transmembrane segment at 142-162 threads the bilayer; that stretch reads KLFMVCFSFAEGPLAWAIIVW. Over 163–173 the chain is Cytoplasmic; sequence RCSLVFSSPDK. A helical membrane pass occupies residues 174-194; that stretch reads IVSVLIHLLPGLVFFTIRWWN. Over 195 to 223 the chain is Lumenal; it reads PATFAAMHPVGTDRRVSWPYVEDKAYLFT. Residues 224–244 traverse the membrane as a helical segment; it reads WLFLVPLVVYTLWQVLYFLIV. At 245–291 the chain is on the cytoplasmic side; that stretch reads NVLRRQRLLRDPEVMTSYRELSKKAEKANNKLWQLSGLLGDQNRIWM. Residues 292-312 form a helical membrane-spanning segment; that stretch reads YILFQAIFTVATMALTVPIFL. Topologically, residues 313 to 315 are lumenal; sequence SYR. Residues 316 to 336 form a helical membrane-spanning segment; it reads LHVIFQILKISAAVWNGGSFL. Residues 337 to 381 are Cytoplasmic-facing; that stretch reads LEVMPRQVIQKEKKKKAEMQPIEEQILHHEAVSHPTENEPKSTET.

It belongs to the GPC1 family.

The protein resides in the membrane. The enzyme catalyses sn-glycerol 3-phosphocholine + an acyl-CoA = a 1-acyl-sn-glycero-3-phosphocholine + CoA. The catalysed reaction is sn-glycero-3-phosphoethanolamine + an acyl-CoA = a monoacyl-sn-glycero-3-phosphoethanolamine + CoA. It catalyses the reaction sn-glycerol 3-phosphocholine + (9Z)-octadecenoyl-CoA = (9Z-octadecenoyl)-sn-glycero-3-phosphocholine + CoA. Its function is as follows. Glycerophosphocholine acyltransferase (GPCAT) that utilizes acyl-CoA to acylate glycero-3-phosphocholine (GPC), forming lysophosphatidylcholine (LPC). Shows broad acyl specificities with a preference for 16:0-CoA, polyunsaturated acyl-CoA, and the hydroxylated ricinoleoyl-CoA. Also catalyzes the acylation of glycero-3-phosphoethanolamine (GPE) with acyl-CoA. In addition to acyl-CoA, GPCAT efficiently utilizes LPC and lysophosphatidylethanolamine (LPE) as acyl donors in the acylation of GPC. Contributes to the maintenance of phosphatidylcholine (PC) homeostasis and might also have specific functions in acyl editing of PC, such as transferring acyl groups modified at the sn-2 position of PC to the sn-1. This chain is Glycerophosphocholine acyltransferase 1, found in Arabidopsis thaliana (Mouse-ear cress).